Here is a 93-residue protein sequence, read N- to C-terminus: Class II hydrophobin 1 (93 aa).

Residues 1–16 (MKFFAVAALFVASAMA) form the signal peptide. 4 disulfide bridges follow: cysteine 24-cysteine 74, cysteine 35-cysteine 65, cysteine 36-cysteine 48, and cysteine 75-cysteine 86.

It belongs to the cerato-ulmin hydrophobin family. Interacts with maize ubiquilin 1-like (UBL) protein. Homotetramer. Further self-assembles to form highly ordered films at water-air interfaces through intermolecular interactions.

The protein resides in the cell membrane. Functionally, aerial growth, conidiation, and dispersal of filamentous fungi in the environment rely upon a capability of their secreting small amphipathic proteins called hydrophobins (HPBs) with low sequence identity. Class I can self-assemble into an outermost layer of rodlet bundles on aerial cell surfaces, conferring cellular hydrophobicity that supports fungal growth, development and dispersal; whereas Class II form highly ordered films at water-air interfaces through intermolecular interactions but contribute nothing to the rodlet structure. Hyd1 is a class II hydrophobin that acts as an elicitor of induced systemic resistance (ISR) in plants. During interaction with the plant, binds with the maize target protein UBL in order to recruit more UBL proteins in maize roots to elicit plant defense responses, including cell death as well as brassinosteroid, jasmonate (JA) and ethylene (ET) signaling. The chain is Class II hydrophobin 1 from Trichoderma harzianum (Hypocrea lixii).